The sequence spans 204 residues: Octanoyltransferase (204 aa).

The region spanning 27 to 204 (KNTKDELWIV…LINYVSRNRH (178 aa)) is the BPL/LPL catalytic domain. Substrate contacts are provided by residues 66–73 (RGGQVTYH), 133–135 (ALG), and 146–148 (GLS). The active-site Acyl-thioester intermediate is Cys-164.

This sequence belongs to the LipB family.

It localises to the cytoplasm. The enzyme catalyses octanoyl-[ACP] + L-lysyl-[protein] = N(6)-octanoyl-L-lysyl-[protein] + holo-[ACP] + H(+). Its pathway is protein modification; protein lipoylation via endogenous pathway; protein N(6)-(lipoyl)lysine from octanoyl-[acyl-carrier-protein]: step 1/2. Functionally, catalyzes the transfer of endogenously produced octanoic acid from octanoyl-acyl-carrier-protein onto the lipoyl domains of lipoate-dependent enzymes. Lipoyl-ACP can also act as a substrate although octanoyl-ACP is likely to be the physiological substrate. This chain is Octanoyltransferase, found in Vesicomyosocius okutanii subsp. Calyptogena okutanii (strain HA).